We begin with the raw amino-acid sequence, 442 residues long: 2-oxoisovalerate dehydrogenase subunit alpha, mitochondrial (442 aa).

Residues 1-42 (MSAAKIWRPSRGLRQAALLLLGRSGVRGLARSHPSRQQQQQF) constitute a mitochondrion transit peptide. The disordered stretch occupies residues 30 to 50 (ARSHPSRQQQQQFPSLDDKPQ). Thiamine diphosphate is bound by residues Tyr-155 and Arg-156. Ser-203 is a binding site for K(+). Residue Ser-204 participates in thiamine diphosphate binding. K(+) is bound by residues Pro-205, Thr-208, and Gln-209. Glu-235 serves as a coordination point for Mg(2+). Thiamine diphosphate contacts are provided by Gly-236, Ala-237, and Arg-262. Residues Asn-264 and Tyr-266 each contribute to the Mg(2+) site. His-333 provides a ligand contact to thiamine diphosphate. Residue Ser-334 is modified to Phosphoserine; by BCKDK. The residue at position 335 (Thr-335) is a Phosphothreonine. 2 positions are modified to phosphoserine: Ser-336 and Ser-344. Lys-353 is subject to N6-acetyllysine; alternate. Lys-353 is modified (N6-succinyllysine; alternate). Lys-377 is subject to N6-succinyllysine.

The protein belongs to the BCKDHA family. In terms of assembly, heterotetramer of 2 alpha/BCKDHA and 2 beta chains/BCKDHB that forms the branched-chain alpha-keto acid decarboxylase (E1) component of the BCKD complex. The branched-chain alpha-ketoacid dehydrogenase is a large complex composed of three major building blocks E1, E2 and E3. It is organized around E2, a 24-meric cubic core composed of DBT, to which are associated 6 to 12 copies of E1, and approximately 6 copies of the dehydrogenase E3, a DLD dimer. Interacts with PPM1K. The cofactor is thiamine diphosphate. Mg(2+) is required as a cofactor. In terms of processing, phosphorylated at Ser-334 by BCKDK and dephosphorylated by protein phosphatase PPM1K.

Its subcellular location is the mitochondrion matrix. It carries out the reaction N(6)-[(R)-lipoyl]-L-lysyl-[protein] + 3-methyl-2-oxobutanoate + H(+) = N(6)-[(R)-S(8)-2-methylpropanoyldihydrolipoyl]-L-lysyl-[protein] + CO2. Functionally, together with BCKDHB forms the heterotetrameric E1 subunit of the mitochondrial branched-chain alpha-ketoacid dehydrogenase (BCKD) complex. The BCKD complex catalyzes the multi-step oxidative decarboxylation of alpha-ketoacids derived from the branched-chain amino-acids valine, leucine and isoleucine producing CO2 and acyl-CoA which is subsequently utilized to produce energy. The E1 subunit catalyzes the first step with the decarboxylation of the alpha-ketoacid forming an enzyme-product intermediate. A reductive acylation mediated by the lipoylamide cofactor of E2 extracts the acyl group from the E1 active site for the next step of the reaction. This Mus musculus (Mouse) protein is 2-oxoisovalerate dehydrogenase subunit alpha, mitochondrial.